A 123-amino-acid chain; its full sequence is Large ribosomal subunit protein bL19c (123 aa).

It belongs to the bacterial ribosomal protein bL19 family.

Its subcellular location is the plastid. It is found in the chloroplast. This chain is Large ribosomal subunit protein bL19c, found in Pyropia yezoensis (Susabi-nori).